Here is a 1411-residue protein sequence, read N- to C-terminus: Uveal autoantigen with coiled-coil domains and ankyrin repeats (1411 aa).

Methionine 1 bears the N-acetylmethionine mark. The tract at residues 1–30 (MKSLKSRLWKQDAPGPTSPSSPTAVASTQS) is disordered. Over residues 13-30 (APGPTSPSSPTAVASTQS) the composition is skewed to low complexity. ANK repeat units lie at residues 69–98 (EGRS…DVAT), 102–131 (AGRN…PTEH), 135–164 (QGRT…SVNA), 168–197 (DGRT…DVNS), 201–230 (QNRT…DLTL), and 234–263 (LGHD…NTNK). The interval 263-301 (KGRELWRKGPPLQQRNLSHTQDEGSVKSTQREQREPHSF) is disordered. Phosphoserine is present on serine 280. Basic and acidic residues predominate over residues 282–301 (TQDEGSVKSTQREQREPHSF). Coiled coils occupy residues 299–379 (HSFQ…NRFK), 442–624 (SENE…LKEL), and 652–1380 (VKRL…AIYR). The disordered stretch occupies residues 1006-1031 (GLKEQLSEQTHKCRQRDEEVKKGKQE).

As to quaternary structure, component of the apoptosome complex, composed of APAF1, pro-caspase-9 and UACA. In the complex, it probably interacts directly with APAF1. Interacts with LGALS3, ARF6 and ACTB. Interacts with RAB39A. As to expression, highly expressed in heart, liver, kidney and testis. Weakly expressed in lung and skeletal muscle. Not expressed in brain and spleen.

It localises to the nucleus. Its subcellular location is the cytoplasm. The protein localises to the cytoskeleton. Regulates APAF1 expression and plays an important role in the regulation of stress-induced apoptosis. Promotes apoptosis by regulating three pathways, apoptosome up-regulation, LGALS3/galectin-3 down-regulation and NF-kappa-B inactivation. Regulates the redistribution of APAF1 into the nucleus after proapoptotic stress. Down-regulates the expression of LGALS3 by inhibiting NFKB1. In terms of biological role, modulates isoactin dynamics to regulate the morphological alterations required for cell growth and motility. Interaction with ARF6 may modulate cell shape and motility after injury. May be involved in multiple neurite formation. This Mus musculus (Mouse) protein is Uveal autoantigen with coiled-coil domains and ankyrin repeats (Uaca).